A 96-amino-acid polypeptide reads, in one-letter code: Putative pterin-4-alpha-carbinolamine dehydratase (96 aa).

It belongs to the pterin-4-alpha-carbinolamine dehydratase family.

The catalysed reaction is (4aS,6R)-4a-hydroxy-L-erythro-5,6,7,8-tetrahydrobiopterin = (6R)-L-erythro-6,7-dihydrobiopterin + H2O. This is Putative pterin-4-alpha-carbinolamine dehydratase from Paraburkholderia xenovorans (strain LB400).